Reading from the N-terminus, the 398-residue chain is Methionine aminopeptidase 1A (398 aa).

Residue Ala-2 is modified to N-acetylalanine. A C6H2-type zinc finger spans residues 12–65 (TLSCARCEKPAHLQCPKCIDLKLPREQASFCTQECFKAAWSSHKSVHVKAQLSS). Zn(2+) is bound by residues Cys-15, Cys-18, Cys-26, Cys-29, Cys-42, Cys-46, His-54, and His-58. His-214 is an a protein binding site. Zn(2+)-binding residues include Asp-231, Asp-242, and His-305. An a protein-binding site is contributed by His-312. The Zn(2+) site is built by Glu-338 and Glu-369.

It belongs to the peptidase M24A family. Methionine aminopeptidase type 1 subfamily. In terms of assembly, associates with the 60S ribosomal subunit of the 80S translational complex. It depends on Zn(2+) as a cofactor. Co(2+) is required as a cofactor. The cofactor is Mn(2+). Requires Fe(2+) as cofactor. In terms of tissue distribution, ubiquitous.

The protein localises to the cytoplasm. The catalysed reaction is Release of N-terminal amino acids, preferentially methionine, from peptides and arylamides.. In terms of biological role, cotranslationally removes the N-terminal methionine from nascent proteins. The N-terminal methionine is often cleaved when the second residue in the primary sequence is small and uncharged (Met-Ala-, Cys, Gly, Pro, Ser, Thr, or Val). The polypeptide is Methionine aminopeptidase 1A (MAP1A) (Arabidopsis thaliana (Mouse-ear cress)).